Consider the following 66-residue polypeptide: Ranalexin (66 aa).

A signal peptide spans 1 to 20; sequence MFTLKKSLLLLFFLGTINLS. The propeptide at 21–44 is small acidic peptide; that stretch reads LCEEERNAEEERRDNPDERDVEVE. C60 and C66 form a disulfide bridge.

This sequence belongs to the frog skin active peptide (FSAP) family. Brevinin subfamily. In terms of tissue distribution, expressed by the skin dorsal glands.

The protein resides in the secreted. In terms of biological role, potent microbicidal activity, active against S.aureus and E.coli. It also acts as a membrane-disruptive agent at higher concentrations. The protein is Ranalexin of Aquarana catesbeiana (American bullfrog).